The sequence spans 251 residues: 5-oxoprolinase subunit A 3 (251 aa).

It belongs to the LamB/PxpA family. As to quaternary structure, forms a complex composed of PxpA, PxpB and PxpC.

The enzyme catalyses 5-oxo-L-proline + ATP + 2 H2O = L-glutamate + ADP + phosphate + H(+). In terms of biological role, catalyzes the cleavage of 5-oxoproline to form L-glutamate coupled to the hydrolysis of ATP to ADP and inorganic phosphate. The polypeptide is 5-oxoprolinase subunit A 3 (Pseudomonas aeruginosa (strain ATCC 15692 / DSM 22644 / CIP 104116 / JCM 14847 / LMG 12228 / 1C / PRS 101 / PAO1)).